We begin with the raw amino-acid sequence, 217 residues long: Ribosomal RNA small subunit methyltransferase G (217 aa).

S-adenosyl-L-methionine-binding positions include glycine 79, leucine 84, 102–104, 130–131, and arginine 144; these read DST and VE.

It belongs to the methyltransferase superfamily. RNA methyltransferase RsmG family.

The protein resides in the cytoplasm. Specifically methylates the N7 position of a guanine in 16S rRNA. This chain is Ribosomal RNA small subunit methyltransferase G, found in Chlorobaculum tepidum (strain ATCC 49652 / DSM 12025 / NBRC 103806 / TLS) (Chlorobium tepidum).